Consider the following 377-residue polypeptide: Nitric oxide reductase FlRd-NAD(+) reductase (377 aa).

Belongs to the FAD-dependent oxidoreductase family. FAD is required as a cofactor.

Its subcellular location is the cytoplasm. The enzyme catalyses 2 reduced [nitric oxide reductase rubredoxin domain] + NAD(+) + H(+) = 2 oxidized [nitric oxide reductase rubredoxin domain] + NADH. Its pathway is nitrogen metabolism; nitric oxide reduction. One of at least two accessory proteins for anaerobic nitric oxide (NO) reductase. Reduces the rubredoxin moiety of NO reductase. This Escherichia coli O17:K52:H18 (strain UMN026 / ExPEC) protein is Nitric oxide reductase FlRd-NAD(+) reductase.